The sequence spans 61 residues: Truncated 3-beta hydroxy-5-ene steroid dehydrogenase homolog (61 aa).

This sequence belongs to the 3-beta-HSD family.

This chain is Truncated 3-beta hydroxy-5-ene steroid dehydrogenase homolog, found in Variola virus (isolate Human/India/Ind3/1967) (VARV).